The following is a 517-amino-acid chain: Probable anion transporter 6, chloroplastic (517 aa).

A disordered region spans residues 51 to 73; sequence TERVRESKKLPPKDPIEDPKPQL. Positions 52–70 are enriched in basic and acidic residues; that stretch reads ERVRESKKLPPKDPIEDPK. Helical transmembrane passes span 130–150, 170–190, 229–249, 255–275, 312–332, 352–372, 397–417, 420–440, 452–472, and 484–504; these read FGWSSSVAGLVQSSFFWGYAL, IGVFTWSFATALVPLLAGFMP, FVFGGLSLGSVMGLLLAPPII, ESVFYLFGLLGVGWFVGFQFL, SFFQSPAVWAMIYTHFCGSWG, LTEAAWVSILPPLASIVVTSL, IAFVAPAICMTLSSVDIGLPP, IVGILTAGLALSSFALSGLYC, ILLGITNTVGAVPGIVGVALT, and MSLFVPSIFFYLTGTVVWLAF.

The protein belongs to the major facilitator superfamily. Sodium/anion cotransporter (TC 2.A.1.14) family. In terms of tissue distribution, expressed in leaf veins and sepals.

Its subcellular location is the plastid. The protein resides in the chloroplast membrane. Its function is as follows. Inorganic phosphate and probable anion transporter. The chain is Probable anion transporter 6, chloroplastic (ANTR6) from Arabidopsis thaliana (Mouse-ear cress).